A 277-amino-acid polypeptide reads, in one-letter code: Glycerol-3-phosphate acyltransferase (277 aa).

A run of 5 helical transmembrane segments spans residues 3-23 (LFIF…AIIV), 55-75 (IMVM…AKFL), 79-99 (PVTV…PVFF), 111-131 (IGAL…TWLL), and 155-175 (LILV…ILVL). A disordered region spans residues 207–277 (SPATSAEQEF…PKTKTVKEKE (71 aa)). Positions 216–239 (FPGKEVIDTNIDETEKTEQAEAVK) are enriched in basic and acidic residues. 2 stretches are compositionally biased toward basic residues: residues 240–253 (KPKV…AKKT) and 262–271 (KPKSTKPKTK).

It belongs to the PlsY family. Probably interacts with PlsX.

The protein localises to the cell inner membrane. It carries out the reaction an acyl phosphate + sn-glycerol 3-phosphate = a 1-acyl-sn-glycero-3-phosphate + phosphate. It functions in the pathway lipid metabolism; phospholipid metabolism. Catalyzes the transfer of an acyl group from acyl-phosphate (acyl-PO(4)) to glycerol-3-phosphate (G3P) to form lysophosphatidic acid (LPA). This enzyme utilizes acyl-phosphate as fatty acyl donor, but not acyl-CoA or acyl-ACP. The polypeptide is Glycerol-3-phosphate acyltransferase (Legionella pneumophila subsp. pneumophila (strain Philadelphia 1 / ATCC 33152 / DSM 7513)).